The sequence spans 346 residues: Histone PARylation factor 1 (346 aa).

An N-acetylmethionine modification is found at methionine 1. 3 positions are modified to N6-acetyllysine: lysine 19, lysine 186, and lysine 233. A PolyADP-ribosyl aspartic acid modification is found at aspartate 235. An ADP-ribosyltyrosine modification is found at tyrosine 238. Glutamate 240 is subject to PolyADP-ribosyl glutamic acid. Residues 242 to 346 (PETDADLKRI…SEENIDQLAG (105 aa)) form an interaction with PARP1 region. Catalysis depends on glutamate 284, which acts as the Proton donor.

It belongs to the HPF1 family. Interacts with PARP1 (via the PARP catalytic domain). Interacts with PARP2 (via the PARP catalytic domain). Interacts with core nucleosomes in a PARP1- and PARP2-dependent manner.

Its subcellular location is the chromosome. The protein resides in the nucleus. In terms of biological role, cofactor for serine ADP-ribosylation that confers serine specificity on PARP1 and PARP2 and plays a key role in DNA damage response. Initiates the repair of double-strand DNA breaks: recruited to DNA damage sites by PARP1 and PARP2 and switches the amino acid specificity of PARP1 and PARP2 from aspartate or glutamate to serine residues, licensing serine ADP-ribosylation of target proteins. Serine ADP-ribosylation of target proteins, such as histones, promotes decompaction of chromatin and the recruitment of repair factors leading to the reparation of DNA strand breaks. Serine ADP-ribosylation of proteins constitutes the primary form of ADP-ribosylation of proteins in response to DNA damage. HPF1 acts by completing the active site of PARP1 and PARP2: forms a composite active site composed of residues from HPF1 and PARP1 or PARP2. While HPF1 promotes the initiation of serine ADP-ribosylation, it restricts the polymerase activity of PARP1 and PARP2 in order to limit the length of poly-ADP-ribose chains. HPF1 also promotes tyrosine ADP-ribosylation, probably by conferring tyrosine specificity on PARP1. The sequence is that of Histone PARylation factor 1 from Mus musculus (Mouse).